The primary structure comprises 128 residues: uncharacterized protein (128 aa).

Residues 1–11 show a composition bias toward basic and acidic residues; that stretch reads MDNKKKEENPS. A disordered region spans residues 1–40; the sequence is MDNKKKEENPSKSDTSISLPPSSTGEALQNYTESEWNASD. Positions 12–37 are enriched in polar residues; that stretch reads KSDTSISLPPSSTGEALQNYTESEWN.

This is an uncharacterized protein from Caenorhabditis elegans.